The primary structure comprises 452 residues: GTPase Der (452 aa).

EngA-type G domains lie at 4–169 (PIVA…PPPE) and 177–352 (IKVA…EEHR). GTP contacts are provided by residues 10-17 (GRPNVGKS), 57-61 (DTGGL), 120-123 (NKCE), 183-190 (GRPNVGKS), 230-234 (DTAGI), and 295-298 (NKWD). One can recognise a KH-like domain in the interval 353–438 (RRVTTAVINE…PIRLLWRGKK (86 aa)).

The protein belongs to the TRAFAC class TrmE-Era-EngA-EngB-Septin-like GTPase superfamily. EngA (Der) GTPase family. As to quaternary structure, associates with the 50S ribosomal subunit.

Its function is as follows. GTPase that plays an essential role in the late steps of ribosome biogenesis. In Rippkaea orientalis (strain PCC 8801 / RF-1) (Cyanothece sp. (strain PCC 8801)), this protein is GTPase Der.